A 190-amino-acid polypeptide reads, in one-letter code: Elongation factor P-like protein (190 aa).

The protein belongs to the elongation factor P family.

The sequence is that of Elongation factor P-like protein from Edwardsiella ictaluri (strain 93-146).